Reading from the N-terminus, the 313-residue chain is Homoserine O-succinyltransferase (313 aa).

Residue Cys-142 is the Acyl-thioester intermediate of the active site. Positions 163 and 192 each coordinate substrate. The Proton acceptor role is filled by His-235. The active site involves Glu-237. Position 249 (Arg-249) interacts with substrate.

Belongs to the MetA family.

It is found in the cytoplasm. It carries out the reaction L-homoserine + succinyl-CoA = O-succinyl-L-homoserine + CoA. It functions in the pathway amino-acid biosynthesis; L-methionine biosynthesis via de novo pathway; O-succinyl-L-homoserine from L-homoserine: step 1/1. Transfers a succinyl group from succinyl-CoA to L-homoserine, forming succinyl-L-homoserine. The sequence is that of Homoserine O-succinyltransferase from Shewanella baltica (strain OS195).